A 400-amino-acid chain; its full sequence is Laminin subunit B (400 aa).

Laminin EGF-like domains are found at residues 1–5, 6–53, and 54–100; these read EGCKP, CECD…GCKS, and CTCN…QCIP. 8 disulfides stabilise this stretch: cysteine 6-cysteine 18, cysteine 8-cysteine 25, cysteine 27-cysteine 36, cysteine 39-cysteine 51, cysteine 54-cysteine 66, cysteine 56-cysteine 73, cysteine 75-cysteine 84, and cysteine 87-cysteine 98. Positions 101-400 are domain II and I; sequence CGECFDNWDK…AEAKNNAHEA (300 aa). Residues 140 to 235 adopt a coiled-coil conformation; sequence KEFEELEQVL…RENALEIQEQ (96 aa). Residues asparagine 160, asparagine 175, asparagine 216, asparagine 266, asparagine 283, asparagine 310, and asparagine 356 are each glycosylated (N-linked (GlcNAc...) asparagine). Residues 353–400 adopt a coiled-coil conformation; that stretch reads EAKNTSRKAEELIKSKYRSTSSTLSELENSNKQCKQATAEAKNNAHEA. Residues 369 to 400 form a disordered region; that stretch reads YRSTSSTLSELENSNKQCKQATAEAKNNAHEA. Positions 371 to 383 are enriched in low complexity; the sequence is STSSTLSELENSN.

Laminin is a complex glycoprotein, consisting of three different polypeptide chains (alpha, beta, gamma), which are bound to each other by disulfide bonds into a cross-shaped molecule comprising one long and three short arms with globules at each end. In terms of tissue distribution, individual glial and muscle cells.

The protein resides in the secreted. It localises to the extracellular space. It is found in the extracellular matrix. Binding to cells via a high affinity receptor, laminin is thought to mediate the attachment, migration and organization of cells into tissues during embryonic development by interacting with other extracellular matrix components. The polypeptide is Laminin subunit B (Hirudo medicinalis (Medicinal leech)).